A 154-amino-acid chain; its full sequence is Myoglobin (154 aa).

The 147-residue stretch at 1 to 147 (MADVKKNCLA…FNDECQHQLA (147 aa)) folds into the Globin domain. Residue His-96 coordinates heme b.

The protein belongs to the globin family.

The protein resides in the cytoplasm. The protein is Myoglobin (GLBB) of Nippostrongylus brasiliensis (Rat hookworm).